Reading from the N-terminus, the 135-residue chain is NADH-quinone oxidoreductase subunit K (135 aa).

A run of 3 helical transmembrane segments spans residues 33–53 (VLGL…FAIG), 63–83 (FLFM…AFVV), and 95–115 (IMFI…LAIL).

Belongs to the complex I subunit 4L family. In terms of assembly, NDH-1 is composed of 14 different subunits. Subunits NuoA, H, J, K, L, M, N constitute the membrane sector of the complex.

The protein resides in the cell inner membrane. The catalysed reaction is a quinone + NADH + 5 H(+)(in) = a quinol + NAD(+) + 4 H(+)(out). In terms of biological role, NDH-1 shuttles electrons from NADH, via FMN and iron-sulfur (Fe-S) centers, to quinones in the respiratory chain. The immediate electron acceptor for the enzyme in this species is believed to be ubiquinone. Couples the redox reaction to proton translocation (for every two electrons transferred, four hydrogen ions are translocated across the cytoplasmic membrane), and thus conserves the redox energy in a proton gradient. This is NADH-quinone oxidoreductase subunit K from Psychrobacter cryohalolentis (strain ATCC BAA-1226 / DSM 17306 / VKM B-2378 / K5).